A 155-amino-acid chain; its full sequence is MRKNRATKREILPDPVYNSRLVTKAINAIMLEGKKGLAQQIVYQSFDLIKKKTNEDGIEVFKKALENIMPSLELRVRRVAGSNFQVPTVVSKERKQTLGLRWLILSARKRNEKSMIEKLAAEIIDASKGTGAAFKKKEDTHKMAEANKAFAHLRF.

The protein belongs to the universal ribosomal protein uS7 family. In terms of assembly, part of the 30S ribosomal subunit. Contacts proteins S9 and S11.

In terms of biological role, one of the primary rRNA binding proteins, it binds directly to 16S rRNA where it nucleates assembly of the head domain of the 30S subunit. Is located at the subunit interface close to the decoding center, probably blocks exit of the E-site tRNA. This Malacoplasma penetrans (strain HF-2) (Mycoplasma penetrans) protein is Small ribosomal subunit protein uS7.